The chain runs to 230 residues: Putative N-acetylmannosamine-6-phosphate 2-epimerase (230 aa).

This sequence belongs to the NanE family.

It carries out the reaction an N-acyl-D-glucosamine 6-phosphate = an N-acyl-D-mannosamine 6-phosphate. The protein operates within amino-sugar metabolism; N-acetylneuraminate degradation; D-fructose 6-phosphate from N-acetylneuraminate: step 3/5. Functionally, converts N-acetylmannosamine-6-phosphate (ManNAc-6-P) to N-acetylglucosamine-6-phosphate (GlcNAc-6-P). In Malacoplasma penetrans (strain HF-2) (Mycoplasma penetrans), this protein is Putative N-acetylmannosamine-6-phosphate 2-epimerase.